The sequence spans 1036 residues: Ubiquitin carboxyl-terminal hydrolase 48 (1036 aa).

The USP domain occupies 89 to 421 (VGLTNLGASC…NAYMLVYRLQ (333 aa)). Cysteine 98 (nucleophile) is an active-site residue. The active-site Proton acceptor is the histidine 353. 3 consecutive DUSP domains span residues 460–554 (QSVD…KALC), 569–692 (NQLN…YKEC), and 712–825 (MIAK…RIEV). The disordered stretch occupies residues 611-644 (DEQDGEAEQSNGKINGSPFSKDESKEEKKEEEEE). Residues 618–628 (EQSNGKINGSP) are compositionally biased toward polar residues. The segment at 881 to 924 (APELNVSSSETEEDKEEAKPDGEKDPDFNQSNGGTKRQKTSQQG) is disordered. A phosphoserine mark is found at serine 887, serine 888, and serine 889. Positions 896–907 (EEAKPDGEKDPD) are enriched in basic and acidic residues. Over residues 908–924 (FNQSNGGTKRQKTSQQG) the composition is skewed to polar residues. In terms of domain architecture, Ubiquitin-like spans 930–1010 (KQVIRRSTRH…ILLKADEPIA (81 aa)). An N6-acetyllysine modification is found at lysine 957.

The protein belongs to the peptidase C19 family. As to quaternary structure, interacts with TRAF2 and RELA. Interacts with GPS1. In terms of tissue distribution, present in the brain, in particular in the postsynaptic density and the dendritic lipid raft fractions (at protein level).

Its subcellular location is the cytoplasm. It is found in the nucleus. The protein resides in the cell projection. It localises to the cilium. It catalyses the reaction Thiol-dependent hydrolysis of ester, thioester, amide, peptide and isopeptide bonds formed by the C-terminal Gly of ubiquitin (a 76-residue protein attached to proteins as an intracellular targeting signal).. Deubiquitinase that recognizes and hydrolyzes the peptide bond at the C-terminal Gly of ubiquitin. Involved in the processing of polyubiquitin precursors as well as that of ubiquitinated proteins. Plays a role in the regulation of NF-kappa-B activation by TNF receptor superfamily via its interactions with RELA and TRAF2. May also play a regulatory role at postsynaptic sites. Plays an important role in cell cycle progression by deubiquitinating Aurora B/AURKB and thereby extending its stability. In the context of H. pylori infection, stabilizes nuclear RELA through deubiquitination, thereby promoting the transcriptional activity of RELA to prolong TNFAIP3 de novo synthesis. Consequently, TNFAIP3 suppresses caspase activity and apoptotic cell death. Also functions in the modulation of the ciliary and synaptic transport as well as cytoskeleton organization, which are key for photoreceptor function and homeostasis. To achieve this, stabilizes the levels of the retinal degeneration-associated proteins ARL3 and UNC119 using distinct mechanisms. Plays a positive role in pyroptosis by stabilizing gasdermin E/GSDME through removal of its 'Lys-48'-linked ubiquitination. This chain is Ubiquitin carboxyl-terminal hydrolase 48 (Usp48), found in Rattus norvegicus (Rat).